The sequence spans 127 residues: Small ribosomal subunit protein eS8 (127 aa).

The protein belongs to the eukaryotic ribosomal protein eS8 family. In terms of assembly, part of the 30S ribosomal subunit.

This Pyrococcus abyssi (strain GE5 / Orsay) protein is Small ribosomal subunit protein eS8 (rps8e).